A 585-amino-acid chain; its full sequence is Nucleoporin p58/p45 (585 aa).

5 consecutive repeat copies span residues 7 to 8, 30 to 31, 42 to 43, 61 to 62, and 66 to 67. Positions 7-565 are 14 X 2 AA repeats of F-G; the sequence is FGSGTLGSTT…VSNPASAGFG (559 aa). The segment at 194 to 232 is disordered; that stretch reads TSAASSEGLGGIDFSTSSDKKSDKTGTRPEDSKALKDEN. The segment covering 211 to 232 has biased composition (basic and acidic residues); sequence SDKKSDKTGTRPEDSKALKDEN. 2 coiled-coil regions span residues 242–262 and 300–367; these read ENLQ…SRMS and ETAQ…SHIT. T317 bears the Phosphothreonine mark. Repeat copies occupy residues 474-475, 478-479, 499-500, 505-506, 515-516, 517-518, 531-532, 554-555, and 564-565. The disordered stretch occupies residues 563 to 585; that stretch reads GFGTGGQLLQLKRPPAGNKRGKR.

This sequence belongs to the NUP58 family. In terms of assembly, component of the p62 complex, a complex composed of NUP62, NUP54, and isoform p58 and isoform p45 of NUP58. Isoform p58 interacts with NUTF2. Isoform p58 interacts with SRP1-alpha and Importin p97 proteins when they are together, but not with SRP1-alpha protein alone. In terms of processing, O-glycosylated. As to expression, expressed in liver.

It is found in the nucleus. It localises to the nuclear pore complex. Its subcellular location is the nucleus membrane. Its function is as follows. Component of the nuclear pore complex, a complex required for the trafficking across the nuclear membrane. The sequence is that of Nucleoporin p58/p45 from Rattus norvegicus (Rat).